The sequence spans 421 residues: Histidine--tRNA ligase (421 aa).

It belongs to the class-II aminoacyl-tRNA synthetase family. In terms of assembly, homodimer.

It is found in the cytoplasm. It carries out the reaction tRNA(His) + L-histidine + ATP = L-histidyl-tRNA(His) + AMP + diphosphate + H(+). The chain is Histidine--tRNA ligase from Francisella tularensis subsp. mediasiatica (strain FSC147).